A 66-amino-acid chain; its full sequence is M-poneratoxin-Dq3a (66 aa).

A signal peptide spans 1-23 (MKLSALSIIFGMILVMTIMYTKA). The propeptide occupies 24-43 (EAEAEAEADADADAKAEAEA).

It belongs to the non-disulfide-bridged peptide (NDBP) superfamily. Medium-length antimicrobial peptide (group 3) family. Ponericin-W subfamily. Expressed by the venom gland.

Its subcellular location is the secreted. It localises to the target cell membrane. May have antimicrobial properties by disrupting the integrity of the bacterial cell membrane. In addition, when tested in vitro on the parasite Trypanosoma cruzi (responsible of the Chagas disease), is able to potently reduce the number of the three forms (epimastigote, trypomastigote and amastigote) by inducing cell death through necrosis. Its function is as follows. May have antimicrobial properties by disrupting the integrity of the bacterial cell membrane. In addition, when tested in vitro on the parasite Trypanosoma cruzi (responsible of the Chagas disease), is able to moderately reduce the number of the forms epimastigote and trypomastigote. Its activity on the amastigote form has not been tested. In terms of biological role, may have antimicrobial properties by disrupting the integrity of the bacterial cell membrane. In addition, when tested in vitro on the parasite Trypanosoma cruzi (responsible of the Chagas disease), shows only a weak reduction of the number of the trypomastigote forms. Has no activity on the epimastigote forms. Its activity on the amastigote form has not been tested. The protein is M-poneratoxin-Dq3a of Dinoponera quadriceps (South American ant).